Reading from the N-terminus, the 152-residue chain is Ribosome maturation factor RimP (152 aa).

It belongs to the RimP family.

It localises to the cytoplasm. Required for maturation of 30S ribosomal subunits. The sequence is that of Ribosome maturation factor RimP from Paraburkholderia phymatum (strain DSM 17167 / CIP 108236 / LMG 21445 / STM815) (Burkholderia phymatum).